The primary structure comprises 358 residues: WAT1-related protein At3g28080 (358 aa).

10 consecutive transmembrane segments (helical) span residues 12 to 32 (AVFL…STLF), 42 to 62 (IYPF…PSLF), 81 to 101 (IGLL…GIEY), 105 to 125 (TLAS…AVIF), 137 to 157 (SVAK…VIFY), 187 to 207 (WLIG…SFIL), 219 to 239 (FTVS…IGLV), 245 to 265 (PSIW…TGII), 283 to 303 (LYLA…GTIF), and 308 to 328 (LYLG…VVMW). One can recognise an EamA domain in the interval 27–155 (GLSTLFKVAT…LSLIGAFVVI (129 aa)).

This sequence belongs to the drug/metabolite transporter (DMT) superfamily. Plant drug/metabolite exporter (P-DME) (TC 2.A.7.4) family.

It localises to the membrane. The sequence is that of WAT1-related protein At3g28080 from Arabidopsis thaliana (Mouse-ear cress).